Reading from the N-terminus, the 715-residue chain is Fatty acid oxidation complex subunit alpha (715 aa).

Residues 1–190 form an enoyl-CoA hydratase/isomerase region; the sequence is MIYEGKAITV…KVGAVDAVVA (190 aa). A substrate-binding site is contributed by Asp297. Residues 312 to 715 are 3-hydroxyacyl-CoA dehydrogenase; sequence HDVKQAAVLG…MAKNGQRFFN (404 aa). NAD(+) contacts are provided by residues Met325, Asp344, 401 to 403, Lys408, and Ser430; that span reads VVE. His451 acts as the For 3-hydroxyacyl-CoA dehydrogenase activity in catalysis. Asn454 serves as a coordination point for NAD(+). The substrate site is built by Asn501 and Tyr660.

It in the N-terminal section; belongs to the enoyl-CoA hydratase/isomerase family. The protein in the C-terminal section; belongs to the 3-hydroxyacyl-CoA dehydrogenase family. As to quaternary structure, heterotetramer of two alpha chains (FadB) and two beta chains (FadA).

It catalyses the reaction a (3S)-3-hydroxyacyl-CoA + NAD(+) = a 3-oxoacyl-CoA + NADH + H(+). The catalysed reaction is a (3S)-3-hydroxyacyl-CoA = a (2E)-enoyl-CoA + H2O. The enzyme catalyses a 4-saturated-(3S)-3-hydroxyacyl-CoA = a (3E)-enoyl-CoA + H2O. It carries out the reaction (3S)-3-hydroxybutanoyl-CoA = (3R)-3-hydroxybutanoyl-CoA. It catalyses the reaction a (3Z)-enoyl-CoA = a 4-saturated (2E)-enoyl-CoA. The catalysed reaction is a (3E)-enoyl-CoA = a 4-saturated (2E)-enoyl-CoA. The protein operates within lipid metabolism; fatty acid beta-oxidation. Involved in the aerobic and anaerobic degradation of long-chain fatty acids via beta-oxidation cycle. Catalyzes the formation of 3-oxoacyl-CoA from enoyl-CoA via L-3-hydroxyacyl-CoA. It can also use D-3-hydroxyacyl-CoA and cis-3-enoyl-CoA as substrate. This is Fatty acid oxidation complex subunit alpha from Pseudomonas putida (Arthrobacter siderocapsulatus).